Here is a 353-residue protein sequence, read N- to C-terminus: 11-beta-hydroxysteroid dehydrogenase B (353 aa).

Residues 10–30 (LFVPPASLITLAFSWPALCFP) traverse the membrane as a helical; Signal-anchor for type II membrane protein segment. Positions 13–26 (PPASLITLAFSWPA) match the Proline-knob motif. Residues 54–80 (GASS…VARR) and D105 each bind NADP(+). S184 is a substrate binding site. Y197 functions as the Proton acceptor in the catalytic mechanism. Residues 197–201 (YAAAK) and K201 each bind NADP(+).

Belongs to the short-chain dehydrogenases/reductases (SDR) family. Expressed in seeds (at protein level).

It localises to the lipid droplet. The protein resides in the membrane. The enzyme catalyses an 11beta-hydroxysteroid + NADP(+) = an 11-oxosteroid + NADPH + H(+). Functionally, has dehydrogenase activity against 11 beta-hydroxysteroid and 17 beta-hydroxysteroid. May be involved in signal transduction regulated by various sterols. This chain is 11-beta-hydroxysteroid dehydrogenase B, found in Arachis hypogaea (Peanut).